Here is a 425-residue protein sequence, read N- to C-terminus: Serine--tRNA ligase (425 aa).

233–235 (TAE) serves as a coordination point for L-serine. An ATP-binding site is contributed by 264–266 (RRE). Glutamate 287 contributes to the L-serine binding site. 351-354 (EISS) contacts ATP. Position 385 (serine 385) interacts with L-serine.

The protein belongs to the class-II aminoacyl-tRNA synthetase family. Type-1 seryl-tRNA synthetase subfamily. As to quaternary structure, homodimer. The tRNA molecule binds across the dimer.

The protein resides in the cytoplasm. The catalysed reaction is tRNA(Ser) + L-serine + ATP = L-seryl-tRNA(Ser) + AMP + diphosphate + H(+). It catalyses the reaction tRNA(Sec) + L-serine + ATP = L-seryl-tRNA(Sec) + AMP + diphosphate + H(+). It functions in the pathway aminoacyl-tRNA biosynthesis; selenocysteinyl-tRNA(Sec) biosynthesis; L-seryl-tRNA(Sec) from L-serine and tRNA(Sec): step 1/1. Functionally, catalyzes the attachment of serine to tRNA(Ser). Is also able to aminoacylate tRNA(Sec) with serine, to form the misacylated tRNA L-seryl-tRNA(Sec), which will be further converted into selenocysteinyl-tRNA(Sec). The protein is Serine--tRNA ligase of Prochlorococcus marinus (strain AS9601).